The chain runs to 164 residues: UPF0304 protein YfbU (164 aa).

Belongs to the UPF0304 family.

The protein is UPF0304 protein YfbU of Shigella flexneri.